A 452-amino-acid polypeptide reads, in one-letter code: Major royal jelly protein 2 (452 aa).

The signal sequence occupies residues 1-17; sequence MTRWLFMVACLGIACQG. 2 N-linked (GlcNAc...) asparagine glycosylation sites follow: N145 and N178. Residues 416–452 are disordered; that stretch reads NNNQNDNIQNTNNQNDNNQKNNKKNANNQKNNNQNDN.

N-linked core structure contains mannose (which consists of 8-alpha-mannosyl residues, one beta-mannosyl residue, and chitobiose). Secreted from the hypopharyngeal glands of the worker honey bee (at protein level); expression peaks at 12 days post eclosion. Expressed in the brains of adult worker bees peaking at 12 days post eclosion (at protein level). Expressed in the spermatheca of adult queen bees (at protein level); Expression levels are higher in mated queens than in virgin queens.

It is found in the secreted. In terms of biological role, highly abundant protein component of royal jelly, a substance produced in the hypopharyngeal gland containing proteins, free amino acids, fatty acids, sugars and other nutrients, which is fed to developing larvae by worker nurse bees. Major royal jelly proteins (MRJPs) are high in essential amino acids and probably have a nutritional function in larval food. All larvae are fed some royal jelly (also known as worker jelly) early in their development but it forms the principal source of nutrition for larvae destined to become queen bees. Produced in the spermatheca of adult queen bees, along with other major royal jelly proteins, where it may act as a nutrient supply for sperm stored by mated queens, or be involved in energy metabolism. This Apis mellifera (Honeybee) protein is Major royal jelly protein 2.